The primary structure comprises 234 residues: Small ribosomal subunit protein uS3 (234 aa).

A KH type-2 domain is found at 39–107; the sequence is IRKFLKKELY…EVSINIKEVK (69 aa).

This sequence belongs to the universal ribosomal protein uS3 family. In terms of assembly, part of the 30S ribosomal subunit. Forms a tight complex with proteins S10 and S14.

Binds the lower part of the 30S subunit head. Binds mRNA in the 70S ribosome, positioning it for translation. The sequence is that of Small ribosomal subunit protein uS3 from Helicobacter pylori (strain J99 / ATCC 700824) (Campylobacter pylori J99).